The primary structure comprises 260 residues: MIFHANPGVIDLGVNIDHVATLRNARGTVYPDPIRAALLAEQAGADLITLHLREDRRHIRDADVRALRPQLATRMNLECAITQEMLDIACEIRPQDVCLVPERREEVTTEGGLDVAGRFELVKAACAQLAGAGIRVSLFIDPDADQIAAAAACGAPVIELHTGRYADAHTPAEQAAEFRRIADGADAGQKHGLVVNAGHGLHYTNVQPIAALPGIKELNIGHAIVAHAVFTGWENAVREMKAIMVAARLGTQYPAASTPA.

Residue Asn15 coordinates 3-amino-2-oxopropyl phosphate. 17-18 (DH) provides a ligand contact to 1-deoxy-D-xylulose 5-phosphate. Position 26 (Arg26) interacts with 3-amino-2-oxopropyl phosphate. The Proton acceptor role is filled by His51. 1-deoxy-D-xylulose 5-phosphate-binding residues include Arg53 and His58. Glu78 serves as the catalytic Proton acceptor. Thr108 contributes to the 1-deoxy-D-xylulose 5-phosphate binding site. His199 functions as the Proton donor in the catalytic mechanism. Residues Gly200 and 221–222 (GH) each bind 3-amino-2-oxopropyl phosphate.

This sequence belongs to the PNP synthase family. As to quaternary structure, homooctamer; tetramer of dimers.

The protein localises to the cytoplasm. It catalyses the reaction 3-amino-2-oxopropyl phosphate + 1-deoxy-D-xylulose 5-phosphate = pyridoxine 5'-phosphate + phosphate + 2 H2O + H(+). It participates in cofactor biosynthesis; pyridoxine 5'-phosphate biosynthesis; pyridoxine 5'-phosphate from D-erythrose 4-phosphate: step 5/5. In terms of biological role, catalyzes the complicated ring closure reaction between the two acyclic compounds 1-deoxy-D-xylulose-5-phosphate (DXP) and 3-amino-2-oxopropyl phosphate (1-amino-acetone-3-phosphate or AAP) to form pyridoxine 5'-phosphate (PNP) and inorganic phosphate. The sequence is that of Pyridoxine 5'-phosphate synthase from Cupriavidus taiwanensis (strain DSM 17343 / BCRC 17206 / CCUG 44338 / CIP 107171 / LMG 19424 / R1) (Ralstonia taiwanensis (strain LMG 19424)).